The chain runs to 89 residues: Putative regulatory protein CLL_A1210 (89 aa).

This sequence belongs to the RemA family.

This chain is Putative regulatory protein CLL_A1210, found in Clostridium botulinum (strain Eklund 17B / Type B).